The following is a 137-amino-acid chain: Large ribosomal subunit protein uL16 (137 aa).

Belongs to the universal ribosomal protein uL16 family. As to quaternary structure, part of the 50S ribosomal subunit.

In terms of biological role, binds 23S rRNA and is also seen to make contacts with the A and possibly P site tRNAs. The protein is Large ribosomal subunit protein uL16 of Ruegeria sp. (strain TM1040) (Silicibacter sp.).